We begin with the raw amino-acid sequence, 233 residues long: Movement and silencing protein TGBp1 (233 aa).

A (+)RNA virus helicase ATP-binding domain is found at 1-133; the sequence is MNHFINLLVA…CKLLSSLGIK (133 aa). The (+)RNA virus helicase C-terminal domain maps to 134–233; that stretch reads VESHRRDRDV…EFPHTTSRPQ (100 aa).

Belongs to the Tymovirales TGBp1 protein family. In terms of assembly, homodimer and homooligomer. Interacts with capsid protein. Interacts with host AGO1; this interaction targets the host protein for degradation, thereby suppressing the antiviral RNA silencing.

It is found in the host cytoplasm. Functionally, transports viral genome to neighboring plant cells directly through plasmosdesmata, without any budding. The movement protein allows efficient cell to cell propagation, by bypassing the host cell wall barrier. Increases plasmodesma size exclusion limit. Acts as a suppressor of RNA-mediated gene silencing, also known as post-transcriptional gene silencing (PTGS), a mechanism of plant viral defense that limits the accumulation of viral RNAs. The polypeptide is Movement and silencing protein TGBp1 (Carica papaya (Papaya)).